The primary structure comprises 131 residues: Ribosome-binding factor A (131 aa).

The protein belongs to the RbfA family. As to quaternary structure, monomer. Binds 30S ribosomal subunits, but not 50S ribosomal subunits or 70S ribosomes.

It is found in the cytoplasm. One of several proteins that assist in the late maturation steps of the functional core of the 30S ribosomal subunit. Associates with free 30S ribosomal subunits (but not with 30S subunits that are part of 70S ribosomes or polysomes). Required for efficient processing of 16S rRNA. May interact with the 5'-terminal helix region of 16S rRNA. This Thermotoga maritima (strain ATCC 43589 / DSM 3109 / JCM 10099 / NBRC 100826 / MSB8) protein is Ribosome-binding factor A.